Reading from the N-terminus, the 251-residue chain is HTH-type transcriptional regulator UlaR (251 aa).

In terms of domain architecture, HTH deoR-type spans 3–58 (EAQRHQILLDMLAQLGFVTVENVIERLGISPATARRDINKLDESGKLKKVRNGAEA). Positions 20–39 (VTVENVIERLGISPATARRD) form a DNA-binding region, H-T-H motif.

The protein resides in the cytoplasm. Functionally, represses ulaG and the ulaABCDEF operon. The polypeptide is HTH-type transcriptional regulator UlaR (Salmonella agona (strain SL483)).